Consider the following 155-residue polypeptide: Protein-export protein SecB (155 aa).

Belongs to the SecB family. Homotetramer, a dimer of dimers. One homotetramer interacts with 1 SecA dimer.

It localises to the cytoplasm. One of the proteins required for the normal export of preproteins out of the cell cytoplasm. It is a molecular chaperone that binds to a subset of precursor proteins, maintaining them in a translocation-competent state. It also specifically binds to its receptor SecA. The chain is Protein-export protein SecB from Escherichia coli O127:H6 (strain E2348/69 / EPEC).